Consider the following 249-residue polypeptide: Aspartate/glutamate leucyltransferase (249 aa).

This sequence belongs to the R-transferase family. Bpt subfamily.

The protein localises to the cytoplasm. It carries out the reaction N-terminal L-glutamyl-[protein] + L-leucyl-tRNA(Leu) = N-terminal L-leucyl-L-glutamyl-[protein] + tRNA(Leu) + H(+). The enzyme catalyses N-terminal L-aspartyl-[protein] + L-leucyl-tRNA(Leu) = N-terminal L-leucyl-L-aspartyl-[protein] + tRNA(Leu) + H(+). Functionally, functions in the N-end rule pathway of protein degradation where it conjugates Leu from its aminoacyl-tRNA to the N-termini of proteins containing an N-terminal aspartate or glutamate. The chain is Aspartate/glutamate leucyltransferase from Brucella melitensis biotype 2 (strain ATCC 23457).